Here is a 640-residue protein sequence, read N- to C-terminus: Protein argonaute (640 aa).

The tract at residues 1–100 is N-terminal domain; it reads MYLNLYEIKI…YIKKKFIDNN (100 aa). Residues 101–153 form a linker L1 region; it reads FYYKRGNNYISINDKFPLDSNTNVNAHLTYKIKLYKINERYYISVLPKFTFLS. Positions 154–209 are PAZ domain; the sequence is DKPALESPIKSTYLFNIKSGKTFPYISGLNGVLKIDLGENGIKEVLFPENYYFNFT. The segment at 210–291 is linker L2; the sequence is SKEAEKFGFS…KYSFYKNDQK (82 aa). The mid domain stretch occupies residues 292–423; sequence IKIAFFFSSK…YVYKMGNFIP (132 aa). Residues 424–640 form a PIWI domain region; that stretch reads ECQPYVIRNL…EWKLYIPYMK (217 aa). Active-site residues include Asp445, Glu481, Asp515, and Asn623. Residue Asp445 coordinates Mn(2+). Mn(2+)-binding residues include Asp515 and Asn623.

This sequence belongs to the argonaute family. Long pAgo subfamily. It depends on Mn(2+) as a cofactor.

A highly versatile argonaute that uses 5'-phospho- and 5'-OH- guide RNA (gRNA) or DNA (gDNA) to cleave target RNA or ssDNA (tDNA) in all possible combinations; has no detectable activity in the absence of guide. Uses short guide sequences (18-21 nucleotides (nt) on average) to bind complementary target nucleic acids resulting in target cleavage in a site-specific manner. Using 5'-phospho-gRNA or 5'-OH-gRNA the cleavage site is 10 nt downstream of the target residue base-paired with the 5'-end of the gRNA, using 5'-phospho-gDNA the cleavage site is 11 nucleotides (nt) downstream, while with 5'-OH-gDNA the cleavage site is 9 nt downstream. In Marinitoga hydrogenitolerans (strain DSM 16785 / JCM 12826 / AT1271), this protein is Protein argonaute.